A 506-amino-acid chain; its full sequence is Protein EFFECTOR OF TRANSCRIPTION 1 (506 aa).

Positions 185-225 constitute a GIY-YIG domain; sequence AFQGLYELSHDHGRKDDVLVANLGQPESIRSRLRSYSRSFA. Over residues 234–247 the composition is skewed to polar residues; it reads LSQTILPTTQNKSD. The tract at residues 234–298 is disordered; sequence LSQTILPTTQ…VSEKHDDIVD (65 aa). Positions 248-272 are enriched in basic and acidic residues; the sequence is NQTEEKKSDSEEEREVSSDAAEKES. The segment covering 273-288 has biased composition (low complexity); that stretch reads NSLPSILRLSRSRPQP. 2 Cx9Cx9RCx2HK repeats span residues 306–331 and 361–386; these read CGVL…TEHK and CGVI…EDHK. Basic and acidic residues predominate over residues 404–413; that stretch reads KAVNEDKSKP. A disordered region spans residues 404-426; it reads KAVNEDKSKPETSTGMNQEGSGL. Residues 414–423 are compositionally biased toward polar residues; that stretch reads ETSTGMNQEG. Cx9Cx9RCx2HK repeat units lie at residues 428–453 and 475–500; these read CEAT…WQHK and CGFK…EEHK.

As to expression, expressed in rosette leaves, stipules, stems, flowers, siliques and mature seeds. Expressed in the vascular bundles of xylem in shoot parenchyma cells. Expressed in the remnant cytoplasm of differentiated fiber cells and in protoxylem element of parenchymal cells.

It is found in the cytoplasm. Its subcellular location is the nucleus. In terms of biological role, transcriptional regulator involved in the regulation of cell differentiation in meristems. Binds DNA without sequence preference. The sequence is that of Protein EFFECTOR OF TRANSCRIPTION 1 from Arabidopsis thaliana (Mouse-ear cress).